The following is a 257-amino-acid chain: Ribosome-associated protein quality control protein P2 (257 aa).

Residues 1-74 (MSDIYQHFRK…RAERKRAILF (74 aa)) form an N-terminal domain region. The tract at residues 87 to 166 (LQAFNVRYAD…EKIDLSDLNI (80 aa)) is central region. Residues 181 to 251 (LRLDAVCASM…GKTKKDKWRV (71 aa)) form the S4 RNA-binding domain.

In the presence of chloramphenicol (a translation elongation inhibitor), but not erythromycin or lincomycin, associates with 50S ribosomal subunits with or without a tRNA in the P-site. The S4 domain binds in a similar position to RqcP.

The protein localises to the cytoplasm. In terms of biological role, part of the ribosome quality control system (RQC), a ribosome-associated complex that mediates the extraction of incompletely synthesized nascent chains from stalled ribosomes and their subsequent degradation. RqcH recruits Ala-charged tRNA, and with RqcP directs the elongation of stalled nascent chains on 50S ribosomal subunits, leading to non-templated C-terminal alanine extensions (Ala tail). The Ala tail promotes nascent chain degradation. RqcP2 (YlmH) overexpression can compensate for RqcP's role in Ala tailing during RQC, restoring Ala tail addition to peptides in stalled ribosomes. Overexpression complements a double ssrA-rqcP double deletion, but not an ssrA-rqcH double deletion. Its function is as follows. The majority of tagged protein is associated with tRNA-less 50S subunits, suggesting it might also play a role in late stage 50S subunit biogenesis. This chain is Ribosome-associated protein quality control protein P2, found in Bacillus subtilis (strain 168).